The sequence spans 585 residues: Protein FAM151A (585 aa).

Residues 14–34 form a helical membrane-spanning segment; the sequence is WVFAGITCVSVVVIAAIVLAI.

It belongs to the menorin family.

The protein resides in the membrane. The protein is Protein FAM151A (FAM151A) of Homo sapiens (Human).